We begin with the raw amino-acid sequence, 274 residues long: WIMGHMVNAIEQVDEFLNLGANAIEFDIDFDKDGIAQITHHGIPCDCGRKCTKKAIFTECLDNIRQVTTPDDPKFREQLVLLALDLKLQRISSAKAYRAGEDVAKKLLDHYWQRGNSRARAYILLNIPLVEDYEFIRAFKDTLKNEGYESYNDKVGINFTGNEDLDKIRDVLEILGIHKQVWQADGITSCFARGTERLKEALEKRDTPGYNYINKVYAWTLVRKSIMRRSLRLGVDGVMSNNPDRVIKVLKEKEFADKFRLATYNDNPWEKFRG.

His5 is an active-site residue. Mg(2+)-binding residues include Glu25 and Asp27. The Nucleophile role is filled by His41. Disulfide bonds link Cys45-Cys51 and Cys47-Cys190. Mg(2+) is bound at residue Asp85.

Belongs to the arthropod phospholipase D family. Class II subfamily. It depends on Mg(2+) as a cofactor. In terms of tissue distribution, expressed by the venom gland.

It localises to the secreted. The enzyme catalyses an N-(acyl)-sphingosylphosphocholine = an N-(acyl)-sphingosyl-1,3-cyclic phosphate + choline. The catalysed reaction is an N-(acyl)-sphingosylphosphoethanolamine = an N-(acyl)-sphingosyl-1,3-cyclic phosphate + ethanolamine. It catalyses the reaction a 1-acyl-sn-glycero-3-phosphocholine = a 1-acyl-sn-glycero-2,3-cyclic phosphate + choline. It carries out the reaction a 1-acyl-sn-glycero-3-phosphoethanolamine = a 1-acyl-sn-glycero-2,3-cyclic phosphate + ethanolamine. Dermonecrotic toxins cleave the phosphodiester linkage between the phosphate and headgroup of certain phospholipids (sphingolipid and lysolipid substrates), forming an alcohol (often choline) and a cyclic phosphate. This toxin acts on sphingomyelin (SM). It may also act on ceramide phosphoethanolamine (CPE), lysophosphatidylcholine (LPC) and lysophosphatidylethanolamine (LPE), but not on lysophosphatidylserine (LPS), and lysophosphatidylglycerol (LPG). It acts by transphosphatidylation, releasing exclusively cyclic phosphate products as second products. Induces dermonecrosis, hemolysis, increased vascular permeability, edema, inflammatory response, and platelet aggregation. In Sicarius cf. damarensis (strain GJB-2008) (Six-eyed sand spider), this protein is Dermonecrotic toxin SdSicTox-betaIIB1biii.